The primary structure comprises 101 residues: Trp operon repressor homolog (101 aa).

Residues 59–82 (QREIQQNLNTSAATITRGSNMLKL) mediate DNA binding.

Belongs to the TrpR family. Homodimer.

The protein localises to the cytoplasm. Its function is as follows. This protein is an aporepressor. When complexed with L-tryptophan it binds the operator region of the trp operon and prevents the initiation of transcription. The protein is Trp operon repressor homolog of Mannheimia succiniciproducens (strain KCTC 0769BP / MBEL55E).